A 165-amino-acid polypeptide reads, in one-letter code: HTH-type transcriptional regulator IscR (165 aa).

One can recognise an HTH rrf2-type domain in the interval 2-131 (RLTSKGRYAV…NNITLAELVN (130 aa)). A DNA-binding region (H-T-H motif) is located at residues 28 to 51 (LADISERQGISLSYLEQLFSRLRK). The [2Fe-2S] cluster site is built by Cys92, Cys98, and Cys104.

Requires [2Fe-2S] cluster as cofactor.

In terms of biological role, regulates the transcription of several operons and genes involved in the biogenesis of Fe-S clusters and Fe-S-containing proteins. This Erwinia tasmaniensis (strain DSM 17950 / CFBP 7177 / CIP 109463 / NCPPB 4357 / Et1/99) protein is HTH-type transcriptional regulator IscR.